The sequence spans 502 residues: Maturase K (502 aa).

Belongs to the intron maturase 2 family. MatK subfamily.

It localises to the plastid. Its subcellular location is the chloroplast. Functionally, usually encoded in the trnK tRNA gene intron. Probably assists in splicing its own and other chloroplast group II introns. This is Maturase K from Brassica campestris (Field mustard).